Consider the following 105-residue polypeptide: Guanidinium exporter (105 aa).

Met-1 is a topological domain (cytoplasmic). Residues 2 to 19 (SWIVLLIAGLLEVVWAIG) form a helical membrane-spanning segment. Over 20-28 (LKYTHGFTR) the chain is Periplasmic. A helical transmembrane segment spans residues 29-48 (LTPSIITIAAMIVSIAMLSW). Topologically, residues 49–54 (AMRTLP) are cytoplasmic. Residues 55-77 (VGTAYAVWTGIGAVGAAITGILL) traverse the membrane as a helical segment. The Periplasmic portion of the chain corresponds to 78–86 (LGESASPAR). The chain crosses the membrane as a helical span at residues 87–104 (LLSLGLIVAGIIGLKLST). Residue His-105 is a topological domain, cytoplasmic.

This sequence belongs to the drug/metabolite transporter (DMT) superfamily. Small multidrug resistance (SMR) (TC 2.A.7.1) family. Gdx/SugE subfamily.

The protein localises to the cell inner membrane. Its function is as follows. Guanidinium ion exporter. Couples guanidinium export to the proton motive force, exchanging one guanidinium ion for two protons. This chain is Guanidinium exporter, found in Citrobacter freundii.